The following is a 665-amino-acid chain: GTPase IMAP family member 8 (665 aa).

The AIG1-type G 1 domain occupies 8-210 (MSELRLLLLG…HVNFKTEGSR (203 aa)). The interval 17–24 (GKCRSGKS) is G1. GTP contacts are provided by residues 17 to 25 (GKCRSGKSA) and S38. The tract at residues 44 to 48 (TVIKM) is G2. The G3 stretch occupies residues 65–68 (DTPD). Positions 134 to 137 (TRKD) are G4. Residues 135–137 (RKD) and N170 contribute to the GTP site. The interval 169-171 (NNK) is G5. A disordered region spans residues 217–246 (EAASQEGDKPQGPRERQLQSTGPEQNPGTS). Basic and acidic residues predominate over residues 222–233 (EGDKPQGPRERQ). A compositionally biased stretch (polar residues) spans 234 to 246 (LQSTGPEQNPGTS). AIG1-type G domains follow at residues 245-435 (TSEL…VFRE) and 436-644 (KETL…SKLI). 2 coiled-coil regions span residues 400 to 427 (NYRA…HQNG) and 608 to 657 (QAQE…EKLL).

Belongs to the TRAFAC class TrmE-Era-EngA-EngB-Septin-like GTPase superfamily. AIG1/Toc34/Toc159-like paraseptin GTPase family. IAN subfamily. In terms of tissue distribution, expressed in the spleen, intestine, liver, and colon, as well as in lung, placenta, kidney, muscle, and heart. Extremely low expression, if any, in brain, in thymus, bone marrow, and blood leukocytes. Detected in T-cells.

The protein resides in the endoplasmic reticulum. Its subcellular location is the golgi apparatus. The protein localises to the mitochondrion. It localises to the cytoplasm. It is found in the cytosol. Functionally, exerts an anti-apoptotic effect in the immune system and is involved in responses to infections. In Homo sapiens (Human), this protein is GTPase IMAP family member 8 (GIMAP8).